The primary structure comprises 386 residues: Arginine biosynthesis bifunctional protein ArgJ (386 aa).

Substrate-binding residues include threonine 148, lysine 170, threonine 181, glutamate 261, asparagine 381, and serine 386. Residue threonine 181 is the Nucleophile of the active site.

It belongs to the ArgJ family. Heterotetramer of two alpha and two beta chains.

It localises to the cytoplasm. The enzyme catalyses N(2)-acetyl-L-ornithine + L-glutamate = N-acetyl-L-glutamate + L-ornithine. It catalyses the reaction L-glutamate + acetyl-CoA = N-acetyl-L-glutamate + CoA + H(+). It functions in the pathway amino-acid biosynthesis; L-arginine biosynthesis; L-ornithine and N-acetyl-L-glutamate from L-glutamate and N(2)-acetyl-L-ornithine (cyclic): step 1/1. The protein operates within amino-acid biosynthesis; L-arginine biosynthesis; N(2)-acetyl-L-ornithine from L-glutamate: step 1/4. Catalyzes two activities which are involved in the cyclic version of arginine biosynthesis: the synthesis of N-acetylglutamate from glutamate and acetyl-CoA as the acetyl donor, and of ornithine by transacetylation between N(2)-acetylornithine and glutamate. This is Arginine biosynthesis bifunctional protein ArgJ from Corynebacterium diphtheriae (strain ATCC 700971 / NCTC 13129 / Biotype gravis).